The primary structure comprises 217 residues: MARKGILGTKLGMTQVFDENNRVVPVTVVKAGPNVVTRIRTPEQDGYSAVQLAYGEISPRKVNKPVTGQYAAAGINPRRFLAELRLDNPDAAAEYQVGQELTAEIFTDGSYVDVTGTSKGKGFAGTMKRHGFRGQGASHGAQAVHRRPGSIGGCATPARVFKGTRMAGRMGNDRVTVQNLLVHKVDTENGVLLIKGAVPGRTGGLVMVRSAVKRGEK.

This sequence belongs to the universal ribosomal protein uL3 family. Part of the 50S ribosomal subunit. Forms a cluster with proteins L14 and L19.

One of the primary rRNA binding proteins, it binds directly near the 3'-end of the 23S rRNA, where it nucleates assembly of the 50S subunit. In Mycolicibacterium paratuberculosis (strain ATCC BAA-968 / K-10) (Mycobacterium paratuberculosis), this protein is Large ribosomal subunit protein uL3.